Consider the following 136-residue polypeptide: Ribosome-binding factor A (136 aa).

Belongs to the RbfA family. As to quaternary structure, monomer. Binds 30S ribosomal subunits, but not 50S ribosomal subunits or 70S ribosomes.

It is found in the cytoplasm. In terms of biological role, one of several proteins that assist in the late maturation steps of the functional core of the 30S ribosomal subunit. Associates with free 30S ribosomal subunits (but not with 30S subunits that are part of 70S ribosomes or polysomes). Required for efficient processing of 16S rRNA. May interact with the 5'-terminal helix region of 16S rRNA. This is Ribosome-binding factor A from Serratia proteamaculans (strain 568).